The primary structure comprises 239 residues: Large ribosomal subunit protein uL3 (239 aa).

Disordered regions lie at residues 140-166 (SHRS…PGHM) and 211-239 (PLPK…QEGA). Residue Gln151 is modified to N5-methylglutamine.

The protein belongs to the universal ribosomal protein uL3 family. As to quaternary structure, part of the 50S ribosomal subunit. Forms a cluster with proteins L14 and L19. Methylated by PrmB.

Functionally, one of the primary rRNA binding proteins, it binds directly near the 3'-end of the 23S rRNA, where it nucleates assembly of the 50S subunit. This chain is Large ribosomal subunit protein uL3, found in Bradyrhizobium sp. (strain BTAi1 / ATCC BAA-1182).